We begin with the raw amino-acid sequence, 140 residues long: Large ribosomal subunit protein bL17 (140 aa).

This sequence belongs to the bacterial ribosomal protein bL17 family. Part of the 50S ribosomal subunit. Contacts protein L32.

In Rhizobium etli (strain ATCC 51251 / DSM 11541 / JCM 21823 / NBRC 15573 / CFN 42), this protein is Large ribosomal subunit protein bL17.